Reading from the N-terminus, the 445-residue chain is N-succinylarginine dihydrolase (445 aa).

Substrate contacts are provided by residues 19–28 (AGLSFGNVAS), Asn-110, and 137–138 (HR). Glu-174 is a catalytic residue. Arg-214 provides a ligand contact to substrate. His-250 is an active-site residue. Asp-252 and Asn-363 together coordinate substrate. Cys-369 (nucleophile) is an active-site residue.

Belongs to the succinylarginine dihydrolase family. Homodimer.

The catalysed reaction is N(2)-succinyl-L-arginine + 2 H2O + 2 H(+) = N(2)-succinyl-L-ornithine + 2 NH4(+) + CO2. It functions in the pathway amino-acid degradation; L-arginine degradation via AST pathway; L-glutamate and succinate from L-arginine: step 2/5. Its function is as follows. Catalyzes the hydrolysis of N(2)-succinylarginine into N(2)-succinylornithine, ammonia and CO(2). The sequence is that of N-succinylarginine dihydrolase from Shewanella pealeana (strain ATCC 700345 / ANG-SQ1).